The sequence spans 354 residues: Gibberellin receptor GID1 (354 aa).

The Involved in the stabilization of the negatively charged intermediate by the formation of the oxyanion hole signature appears at 120–122; it reads HGG. Residues 122-123, Tyr-134, Ser-198, and Asp-250 each bind gibberellin A3; that span reads GS. Residues 122–123, Tyr-134, and Ser-198 each bind gibberellin A4; that span reads GS. The active site involves Ser-198. Residue Asp-296 is part of the active site. Gly-327 serves as a coordination point for gibberellin A3. A gibberellin A4-binding site is contributed by Gly-327.

This sequence belongs to the 'GDXG' lipolytic enzyme family. As to quaternary structure, interacts with the DELLA protein SLR1 in a GA-dependent manner, resulting in subsequent SLR1 degradation.

It localises to the nucleus. Functionally, functions as a soluble gibberellin (GA) receptor. GA is an essential hormone that regulates growth and development in plants. Binds with high affinity the biologically active GAs such as GA1, GA3 and GA4, but has low or no affinity for the biologically inactive GAs. Upon GA-binding, it interacts with the DELLA protein SLR1, a repressor of GA signaling. This leads to SLR1 degradation by the proteasome, allowing the GA signaling pathway. This chain is Gibberellin receptor GID1, found in Oryza sativa subsp. japonica (Rice).